The primary structure comprises 301 residues: Epimerase family protein Mb2239 (301 aa).

It belongs to the NAD(P)-dependent epimerase/dehydratase family. SDR39U1 subfamily.

In Mycobacterium bovis (strain ATCC BAA-935 / AF2122/97), this protein is Epimerase family protein Mb2239.